The sequence spans 556 residues: Arginine--tRNA ligase (556 aa).

The short motif at 134 to 144 is the 'HIGH' region element; it reads ANPTGPLHIGH.

The protein belongs to the class-I aminoacyl-tRNA synthetase family. As to quaternary structure, monomer.

The protein localises to the cytoplasm. It catalyses the reaction tRNA(Arg) + L-arginine + ATP = L-arginyl-tRNA(Arg) + AMP + diphosphate. The protein is Arginine--tRNA ligase of Micrococcus luteus (strain ATCC 4698 / DSM 20030 / JCM 1464 / CCM 169 / CCUG 5858 / IAM 1056 / NBRC 3333 / NCIMB 9278 / NCTC 2665 / VKM Ac-2230) (Micrococcus lysodeikticus).